Reading from the N-terminus, the 441-residue chain is Glutamate-1-semialdehyde 2,1-aminomutase (441 aa).

Lysine 279 is modified (N6-(pyridoxal phosphate)lysine).

This sequence belongs to the class-III pyridoxal-phosphate-dependent aminotransferase family. HemL subfamily. As to quaternary structure, homodimer. Pyridoxal 5'-phosphate is required as a cofactor.

Its subcellular location is the cytoplasm. It carries out the reaction (S)-4-amino-5-oxopentanoate = 5-aminolevulinate. It participates in porphyrin-containing compound metabolism; protoporphyrin-IX biosynthesis; 5-aminolevulinate from L-glutamyl-tRNA(Glu): step 2/2. The sequence is that of Glutamate-1-semialdehyde 2,1-aminomutase from Leptospira borgpetersenii serovar Hardjo-bovis (strain JB197).